Here is a 78-residue protein sequence, read N- to C-terminus: Esculentin-2PLa (78 aa).

Positions 1-22 (MFTTKKSMLLLFFLGTISLSLC) are cleaved as a signal peptide. The propeptide occupies 23 to 39 (EEERGADEEEGDGEKLM). C72 and C78 are joined by a disulfide.

In terms of tissue distribution, expressed by the skin glands.

The protein localises to the secreted. Its function is as follows. Antimicrobial activity against the Gram-negative bacterium E.coli, the Gram-positive bacterium S.aureus and the yeast C.albicans. This is Esculentin-2PLa from Lithobates palustris (Pickerel frog).